The following is a 321-amino-acid chain: Malate dehydrogenase (321 aa).

NAD(+) contacts are provided by residues 10 to 15 (GSGMIG) and Asp-34. Arg-83 and Arg-89 together coordinate substrate. NAD(+)-binding positions include Asn-96 and 119–121 (ITN). The substrate site is built by Asn-121 and Arg-152. The active-site Proton acceptor is His-176.

It belongs to the LDH/MDH superfamily. MDH type 3 family.

It catalyses the reaction (S)-malate + NAD(+) = oxaloacetate + NADH + H(+). Catalyzes the reversible oxidation of malate to oxaloacetate. The protein is Malate dehydrogenase of Sinorhizobium fredii (strain NBRC 101917 / NGR234).